The sequence spans 272 residues: Formamidopyrimidine-DNA glycosylase (272 aa).

The active-site Schiff-base intermediate with DNA is the proline 2. Residue glutamate 3 is the Proton donor of the active site. Catalysis depends on lysine 58, which acts as the Proton donor; for beta-elimination activity. Residues histidine 92, arginine 111, and arginine 153 each coordinate DNA. Residues 238–272 form an FPG-type zinc finger; the sequence is AVYGRQGQSCPRCGGLVERCRLGQRSTFFCPACQR. Arginine 262 acts as the Proton donor; for delta-elimination activity in catalysis.

This sequence belongs to the FPG family. As to quaternary structure, monomer. Requires Zn(2+) as cofactor.

It catalyses the reaction Hydrolysis of DNA containing ring-opened 7-methylguanine residues, releasing 2,6-diamino-4-hydroxy-5-(N-methyl)formamidopyrimidine.. The catalysed reaction is 2'-deoxyribonucleotide-(2'-deoxyribose 5'-phosphate)-2'-deoxyribonucleotide-DNA = a 3'-end 2'-deoxyribonucleotide-(2,3-dehydro-2,3-deoxyribose 5'-phosphate)-DNA + a 5'-end 5'-phospho-2'-deoxyribonucleoside-DNA + H(+). In terms of biological role, involved in base excision repair of DNA damaged by oxidation or by mutagenic agents. Acts as a DNA glycosylase that recognizes and removes damaged bases. Has a preference for oxidized purines, such as 7,8-dihydro-8-oxoguanine (8-oxoG). Has AP (apurinic/apyrimidinic) lyase activity and introduces nicks in the DNA strand. Cleaves the DNA backbone by beta-delta elimination to generate a single-strand break at the site of the removed base with both 3'- and 5'-phosphates. This Laribacter hongkongensis (strain HLHK9) protein is Formamidopyrimidine-DNA glycosylase.